The primary structure comprises 299 residues: DNA-binding transcriptional repressor CapW (299 aa).

The interval 1–84 (MESSGSSKVR…EFKPITKRSE (84 aa)) is winged HTH domain. Residues 85-196 (ATRYLNELQR…IGRLDVLEHV (112 aa)) are WYL domain. In terms of domain architecture, WYL spans 120 to 200 (SRAIEADEVA…DVLEHVFSAK (81 aa)). A probable ligand-binding region region spans residues 145–189 (YQSMDAPEPQEWVLSPHALGFDGLRWHARAWCHARQVFRDFAIGR). The interval 197–299 (FSAKPVDPLL…DRDGLQHLRR (103 aa)) is WCX domain.

In terms of assembly, homodimer.

Functionally, transcriptional regulator of a CBASS antivirus system. CBASS (cyclic oligonucleotide-based antiphage signaling system) provides immunity against bacteriophage. The CD-NTase protein synthesizes cyclic nucleotides in response to infection; these serve as specific second messenger signals. The signals activate a diverse range of effectors, leading to bacterial cell death and thus abortive phage infection. A type III CBASS system, part of a CapW-Cap6-Cap8-Cap7-CdnC-NucC locus. Binds specifically to palindromes that overlap the -10 site in the promoter of cap6, found beween found between the genes for divergently transcribed capW and cap6 (cognate DNA). Probably represses transcription bidirectionally from the promoter. Mutations that make it a constitutive repressor in E.coli do not change DNA-binding affinity. In Stenotrophomonas maltophilia (Pseudomonas maltophilia), this protein is DNA-binding transcriptional repressor CapW.